The primary structure comprises 711 residues: Glycine--tRNA ligase beta subunit (711 aa).

This sequence belongs to the class-II aminoacyl-tRNA synthetase family. Tetramer of two alpha and two beta subunits.

Its subcellular location is the cytoplasm. The catalysed reaction is tRNA(Gly) + glycine + ATP = glycyl-tRNA(Gly) + AMP + diphosphate. This Polaromonas naphthalenivorans (strain CJ2) protein is Glycine--tRNA ligase beta subunit.